The chain runs to 182 residues: CD-NTase-associated protein 15 (182 aa).

Transmembrane regions (helical) follow at residues 11–31 and 33–53; these read ITGW…CTVW and IGWI…TIGY.

This sequence belongs to the CBASS Cap15 membrane effector family. In terms of assembly, the beta barrel domain oligomerizes; in the presence of cyclic nucleotides (probably 3',2'-cGAMP) higher-level oligomers occur.

The protein localises to the cell membrane. Functionally, effector protein of a CBASS antivirus system. CBASS (cyclic oligonucleotide-based antiphage signaling system) provides immunity against bacteriophage. The CD-NTase protein (CdnE) synthesizes cyclic nucleotides in response to infection; these serve as specific second messenger signals. The signals activate a diverse range of effectors, leading to bacterial cell death and thus abortive phage infection. This system triggers membrane disruption without lysis. A type I-B CBASS system. Binds cyclic nucleotide second messenger 3',2'-cGAMP, probably oligomerizing, and induces cell membrane shrinkage and rupture, leading to cell death. Its function is as follows. Protects S.aureus against phage infection. When the CBASS operon (cdnE-cap15) is introduced in S.aureus strain RN4220 there is strong protection against lytic DNA phages 80alpha-vir and phi-NM1-gamma-6 but little to no protection against phages phi-NM4-gamma-4 or phi-12-gamma-3. The chain is CD-NTase-associated protein 15 from Staphylococcus schleiferi.